Consider the following 87-residue polypeptide: HssA/B-like protein 18 (87 aa).

The protein belongs to the hssA/B family.

The sequence is that of HssA/B-like protein 18 (hssl18) from Dictyostelium discoideum (Social amoeba).